Consider the following 285-residue polypeptide: Pantothenate synthetase (285 aa).

30–37 (MGFLHEGH) provides a ligand contact to ATP. The active-site Proton donor is His-37. Gln-61 provides a ligand contact to (R)-pantoate. Residue Gln-61 coordinates beta-alanine. 148–151 (GKKD) is a binding site for ATP. Gln-154 provides a ligand contact to (R)-pantoate. ATP contacts are provided by residues Val-177 and 185 to 188 (LSSR).

The protein belongs to the pantothenate synthetase family. Homodimer.

It is found in the cytoplasm. The enzyme catalyses (R)-pantoate + beta-alanine + ATP = (R)-pantothenate + AMP + diphosphate + H(+). It participates in cofactor biosynthesis; (R)-pantothenate biosynthesis; (R)-pantothenate from (R)-pantoate and beta-alanine: step 1/1. Functionally, catalyzes the condensation of pantoate with beta-alanine in an ATP-dependent reaction via a pantoyl-adenylate intermediate. This Leptospira interrogans serogroup Icterohaemorrhagiae serovar copenhageni (strain Fiocruz L1-130) protein is Pantothenate synthetase.